Here is an 84-residue protein sequence, read N- to C-terminus: Molybdopterin synthase sulfur carrier subunit (84 aa).

The residue at position 84 (Gly-84) is a 1-thioglycine; alternate. Gly-84 carries the glycyl adenylate; alternate modification.

It belongs to the MoaD family. MOCS2A subfamily. Heterotetramer; composed of 2 small (MOCS2A) and 2 large (MOCS2B) subunits. Post-translationally, C-terminal thiocarboxylation occurs in 2 steps, it is first acyl-adenylated (-COAMP) via the hesA/moeB/thiF part of MOCS3, then thiocarboxylated (-COSH) via the rhodanese domain of MOCS3.

Its subcellular location is the cytoplasm. The protein operates within cofactor biosynthesis; molybdopterin biosynthesis. Its function is as follows. Acts as a sulfur carrier required for molybdopterin biosynthesis. Component of the molybdopterin synthase complex that catalyzes the conversion of precursor Z into molybdopterin by mediating the incorporation of 2 sulfur atoms into precursor Z to generate a dithiolene group. In the complex, serves as sulfur donor by being thiocarboxylated (-COSH) at its C-terminus by MOCS3. After interaction with MOCS2B, the sulfur is then transferred to precursor Z to form molybdopterin. In Caenorhabditis elegans, this protein is Molybdopterin synthase sulfur carrier subunit.